The following is a 246-amino-acid chain: Purine nucleoside phosphorylase Cgl2154/cg2365 (246 aa).

Residues histidine 68, cysteine 107, and histidine 124 each coordinate Zn(2+).

The protein belongs to the purine nucleoside phosphorylase YfiH/LACC1 family. As to quaternary structure, homodimer. The cofactor is Cu(2+). Zn(2+) is required as a cofactor.

The catalysed reaction is adenosine + phosphate = alpha-D-ribose 1-phosphate + adenine. The enzyme catalyses S-methyl-5'-thioadenosine + phosphate = 5-(methylsulfanyl)-alpha-D-ribose 1-phosphate + adenine. It carries out the reaction inosine + phosphate = alpha-D-ribose 1-phosphate + hypoxanthine. It catalyses the reaction adenosine + H2O + H(+) = inosine + NH4(+). In terms of biological role, purine nucleoside enzyme that catalyzes the phosphorolysis of adenosine and inosine nucleosides, yielding D-ribose 1-phosphate and the respective free bases, adenine and hypoxanthine. Also catalyzes the phosphorolysis of S-methyl-5'-thioadenosine into adenine and S-methyl-5-thio-alpha-D-ribose 1-phosphate. Also has adenosine deaminase activity. The protein is Purine nucleoside phosphorylase Cgl2154/cg2365 of Corynebacterium glutamicum (strain ATCC 13032 / DSM 20300 / JCM 1318 / BCRC 11384 / CCUG 27702 / LMG 3730 / NBRC 12168 / NCIMB 10025 / NRRL B-2784 / 534).